Reading from the N-terminus, the 105-residue chain is Small ribosomal subunit protein eS10B (105 aa).

This sequence belongs to the eukaryotic ribosomal protein eS10 family. As to quaternary structure, component of the small ribosomal subunit (SSU). Mature yeast ribosomes consist of a small (40S) and a large (60S) subunit. The 40S small subunit contains 1 molecule of ribosomal RNA (18S rRNA) and 33 different proteins (encoded by 57 genes). The large 60S subunit contains 3 rRNA molecules (25S, 5.8S and 5S rRNA) and 46 different proteins (encoded by 81 genes). eS10 interacts with GCN1 (via middle region); this interaction is direct and promotes GCN2 kinase activity. In terms of processing, the N-terminus is not modified.

It is found in the cytoplasm. Component of the ribosome, a large ribonucleoprotein complex responsible for the synthesis of proteins in the cell. The small ribosomal subunit (SSU) binds messenger RNAs (mRNAs) and translates the encoded message by selecting cognate aminoacyl-transfer RNA (tRNA) molecules. The large subunit (LSU) contains the ribosomal catalytic site termed the peptidyl transferase center (PTC), which catalyzes the formation of peptide bonds, thereby polymerizing the amino acids delivered by tRNAs into a polypeptide chain. The nascent polypeptides leave the ribosome through a tunnel in the LSU and interact with protein factors that function in enzymatic processing, targeting, and the membrane insertion of nascent chains at the exit of the ribosomal tunnel. eS10 plays a role as a positive regulator of the GCN2 kinase activity by stimulating GCN1-mediated GCN2 activation. In Saccharomyces cerevisiae (strain ATCC 204508 / S288c) (Baker's yeast), this protein is Small ribosomal subunit protein eS10B.